Consider the following 78-residue polypeptide: Omega-conotoxin-like VnMKLT1-0111 (78 aa).

The N-terminal stretch at 1–22 is a signal peptide; that stretch reads MKLTCMMIVAVLFLTAWTFVTA. Positions 23–48 are excised as a propeptide; sequence DSRNGLEYLFPKAHYEMNPEASKLNK. Disulfide bonds link cysteine 52-cysteine 69, cysteine 59-cysteine 73, and cysteine 68-cysteine 77.

This sequence belongs to the conotoxin O1 superfamily. Expressed by the venom duct.

It is found in the secreted. In terms of biological role, omega-conotoxins act at presynaptic membranes, they bind and block voltage-gated calcium channels (Cav). The polypeptide is Omega-conotoxin-like VnMKLT1-0111 (Conus ventricosus (Mediterranean cone)).